A 175-amino-acid polypeptide reads, in one-letter code: Small ribosomal subunit protein uS5 (175 aa).

One can recognise an S5 DRBM domain in the interval 11–74; it reads LSEVLVDVNR…QAAKKRMMKV (64 aa).

The protein belongs to the universal ribosomal protein uS5 family. Part of the 30S ribosomal subunit. Contacts proteins S4 and S8.

In terms of biological role, with S4 and S12 plays an important role in translational accuracy. Its function is as follows. Located at the back of the 30S subunit body where it stabilizes the conformation of the head with respect to the body. The protein is Small ribosomal subunit protein uS5 of Rickettsia prowazekii (strain Madrid E).